The chain runs to 326 residues: Peroxidase 6 (326 aa).

Positions 1–20 are cleaved as a signal peptide; that stretch reads MKSFGLCLFILVSSPCLLQA. A glycan (N-linked (GlcNAc...) asparagine) is linked at Asn-21. 4 cysteine pairs are disulfide-bonded: Cys-31–Cys-112, Cys-64–Cys-69, Cys-118–Cys-318, and Cys-197–Cys-228. His-62 functions as the Proton acceptor in the catalytic mechanism. 5 residues coordinate Ca(2+): Asp-63, Val-66, Gly-68, Asp-70, and Ser-72. Residue Asn-163 is glycosylated (N-linked (GlcNAc...) asparagine). His-190 contributes to the heme b binding site. Thr-191 is a binding site for Ca(2+). 2 N-linked (GlcNAc...) asparagine glycosylation sites follow: Asn-206 and Asn-230. Asp-242, Thr-245, and Asp-250 together coordinate Ca(2+). The N-linked (GlcNAc...) asparagine glycan is linked to Asn-274.

Belongs to the peroxidase family. Classical plant (class III) peroxidase subfamily. Requires heme b as cofactor. The cofactor is Ca(2+).

The protein localises to the secreted. The enzyme catalyses 2 a phenolic donor + H2O2 = 2 a phenolic radical donor + 2 H2O. Its function is as follows. Removal of H(2)O(2), oxidation of toxic reductants, biosynthesis and degradation of lignin, suberization, auxin catabolism, response to environmental stresses such as wounding, pathogen attack and oxidative stress. These functions might be dependent on each isozyme/isoform in each plant tissue. The polypeptide is Peroxidase 6 (PER6) (Arabidopsis thaliana (Mouse-ear cress)).